The primary structure comprises 519 residues: Na(+)/H(+) exchange regulatory cofactor NHE-RF3 (519 aa).

PDZ domains are found at residues 9–90 (ECKL…LDGD), 134–215 (RLCY…VDKE), and 243–323 (IVEM…VDKE). S148, S192, S250, S334, and S348 each carry phosphoserine. Residues 347–374 (GSVKEAPAPTPTSLEVSSPPDTTEEVDH) form a disordered region. Residues 357 to 367 (PTSLEVSSPPD) show a composition bias toward polar residues. Residues 378–458 (LCRLAKGENG…NVTLLVCGKK (81 aa)) enclose the PDZ 4 domain. A Phosphothreonine modification is found at T451. The disordered stretch occupies residues 473 to 519 (SLADPPDTPPDSKEGIVVESKHDSHMAKERAHSTASHSSSNSEDTEM). Basic and acidic residues predominate over residues 482-504 (PDSKEGIVVESKHDSHMAKERAH). Residues S492, S508, S510, S511, S512, and S514 each carry the phosphoserine modification. A compositionally biased stretch (low complexity) spans 505–519 (STASHSSSNSEDTEM).

It belongs to the NHER family. In terms of assembly, interacts with PDZK1IP1 and ABCC2. Binds to the C-terminal region of SLC26A3. Interacts (via PDZ domains 1 and 3) with SCARB1 (C-terminal domain). Forms a heterodimeric complex with NHERF1. Interacts with AKAP2, BCR, CFTR, SLCO1A1, SLC22A12, SLC22A4, SLC22A5, NHERF2 and SLC17A1. Component of a complex, composed of PDZK1, SYNGAP1, KLHL17 and NMDA receptors. Interacts (via PDZ1 domain) directly with KLHL17; the interaction is important for integrity of actin cytoskeleton structures in neurons. Interacts (via C-terminal PDZ domain) with SLC26A6 (via C-terminal domain). Interacts (via C-terminal PDZ domain) with SLC9A3 (via C-terminal domain). Interacts (via the first PDZ domain) with PTGIR (via non-isoprenylated C-terminus). Interacts (via PDZ domains 1 and 3) with SLC5A8 (via PDZ-binding motif); interaction increases nicotinate transport activity of SLC5A8.

It is found in the membrane. The protein localises to the cell membrane. In terms of biological role, a scaffold protein that connects plasma membrane proteins and regulatory components, regulating their surface expression in epithelial cells apical domains. May be involved in the coordination of a diverse range of regulatory processes for ion transport and second messenger cascades. In complex with NHERF1, may cluster proteins that are functionally dependent in a mutual fashion and modulate the trafficking and the activity of the associated membrane proteins. May play a role in the cellular mechanisms associated with multidrug resistance through its interaction with ABCC2 and PDZK1IP1. May potentiate the CFTR chloride channel activity. Required for normal cell-surface expression of SCARB1. Plays a role in maintaining normal plasma cholesterol levels via its effects on SCARB1. Plays a role in the normal localization and function of the chloride-anion exchanger SLC26A6 to the plasma membrane in the brush border of the proximal tubule of the kidney. May be involved in the regulation of proximal tubular Na(+)-dependent inorganic phosphate cotransport therefore playing an important role in tubule function. This is Na(+)/H(+) exchange regulatory cofactor NHE-RF3 (PDZK1) from Pongo abelii (Sumatran orangutan).